Consider the following 441-residue polypeptide: MSNVTHQPKIGFVSLGCPKNLVDSERILTELRTEGYDVVPRYDDADMVIVNTCGFIDSAVQESLEAIGEALNENGKVIVTGCLGAKEDQIREVHPKVLEITGPHSYEQVLQHVHHYVPKPKHNPFLSLVPEQDVKLTPRHYAYLKISEGCNHRCTFCIIPSMRGDLVSRPIGDVLSEAKRLVDAGVKEILVISQDTSAYGVDVKHRTGFHNGEPVKTSMVSLCEQLSKLGVWTRLHYVYPYPHVDDVIPLMAEGKILPYLDIPLQHASPRILKLMKRPGSVDRQLARIKQWREICPELTLRSTFIVGFPGETEEDFQMLLDFLKEARLDRVGCFKYSPVEGAGANDLPDQVPEEVKEERWNRFMQLQQQISAERLQEKVGREILVIVDEVDEEGAIGRSMADAPEIDGAVYLNGETNVKPGDIVRVKVENADEYDLWGSRV.

The region spanning 8–118 is the MTTase N-terminal domain; it reads PKIGFVSLGC…VLQHVHHYVP (111 aa). [4Fe-4S] cluster-binding residues include Cys-17, Cys-53, Cys-82, Cys-150, Cys-154, and Cys-157. One can recognise a Radical SAM core domain in the interval 136–373; sequence LTPRHYAYLK…MQLQQQISAE (238 aa). The TRAM domain maps to 376-441; it reads QEKVGREILV…DEYDLWGSRV (66 aa).

Belongs to the methylthiotransferase family. RimO subfamily. It depends on [4Fe-4S] cluster as a cofactor.

It is found in the cytoplasm. The catalysed reaction is L-aspartate(89)-[ribosomal protein uS12]-hydrogen + (sulfur carrier)-SH + AH2 + 2 S-adenosyl-L-methionine = 3-methylsulfanyl-L-aspartate(89)-[ribosomal protein uS12]-hydrogen + (sulfur carrier)-H + 5'-deoxyadenosine + L-methionine + A + S-adenosyl-L-homocysteine + 2 H(+). Catalyzes the methylthiolation of an aspartic acid residue of ribosomal protein uS12. This is Ribosomal protein uS12 methylthiotransferase RimO from Salmonella paratyphi B (strain ATCC BAA-1250 / SPB7).